A 339-amino-acid chain; its full sequence is Ketol-acid reductoisomerase (NADP(+)) (339 aa).

One can recognise a KARI N-terminal Rossmann domain in the interval 1–182 (MRVYYDRDAD…GGGRSGIIET (182 aa)). Residues 24–27 (YGSQ), Arg48, Ser51, Thr53, and 83–86 (DEHQ) contribute to the NADP(+) site. Residue His108 is part of the active site. Residue Gly134 participates in NADP(+) binding. Residues 183–328 (NFREECETDL…ARLRGMMPWI (146 aa)) form the KARI C-terminal knotted domain. Mg(2+) contacts are provided by Asp191, Glu195, Glu227, and Glu231. Ser252 is a substrate binding site.

Belongs to the ketol-acid reductoisomerase family. Mg(2+) serves as cofactor.

The enzyme catalyses (2R)-2,3-dihydroxy-3-methylbutanoate + NADP(+) = (2S)-2-acetolactate + NADPH + H(+). It catalyses the reaction (2R,3R)-2,3-dihydroxy-3-methylpentanoate + NADP(+) = (S)-2-ethyl-2-hydroxy-3-oxobutanoate + NADPH + H(+). Its pathway is amino-acid biosynthesis; L-isoleucine biosynthesis; L-isoleucine from 2-oxobutanoate: step 2/4. It functions in the pathway amino-acid biosynthesis; L-valine biosynthesis; L-valine from pyruvate: step 2/4. Involved in the biosynthesis of branched-chain amino acids (BCAA). Catalyzes an alkyl-migration followed by a ketol-acid reduction of (S)-2-acetolactate (S2AL) to yield (R)-2,3-dihydroxy-isovalerate. In the isomerase reaction, S2AL is rearranged via a Mg-dependent methyl migration to produce 3-hydroxy-3-methyl-2-ketobutyrate (HMKB). In the reductase reaction, this 2-ketoacid undergoes a metal-dependent reduction by NADPH to yield (R)-2,3-dihydroxy-isovalerate. This is Ketol-acid reductoisomerase (NADP(+)) from Caulobacter sp. (strain K31).